The chain runs to 335 residues: Glyceraldehyde-3-phosphate dehydrogenase (335 aa).

Residues 12 to 13 (RI), Asp-36, Arg-80, and Ser-122 contribute to the NAD(+) site. D-glyceraldehyde 3-phosphate-binding positions include 152–154 (SCT), Thr-183, Arg-198, 211–212 (TG), and Arg-234. Cys-153 functions as the Nucleophile in the catalytic mechanism. Asn-316 is a binding site for NAD(+).

The protein belongs to the glyceraldehyde-3-phosphate dehydrogenase family. As to quaternary structure, homotetramer.

It localises to the cytoplasm. The catalysed reaction is D-glyceraldehyde 3-phosphate + phosphate + NAD(+) = (2R)-3-phospho-glyceroyl phosphate + NADH + H(+). The protein operates within carbohydrate degradation; glycolysis; pyruvate from D-glyceraldehyde 3-phosphate: step 1/5. Catalyzes the oxidative phosphorylation of glyceraldehyde 3-phosphate (G3P) to 1,3-bisphosphoglycerate (BPG) using the cofactor NAD. The first reaction step involves the formation of a hemiacetal intermediate between G3P and a cysteine residue, and this hemiacetal intermediate is then oxidized to a thioester, with concomitant reduction of NAD to NADH. The reduced NADH is then exchanged with the second NAD, and the thioester is attacked by a nucleophilic inorganic phosphate to produce BPG. The polypeptide is Glyceraldehyde-3-phosphate dehydrogenase (gap) (Xanthobacter flavus).